Here is a 368-residue protein sequence, read N- to C-terminus: o-succinylbenzoate synthase (368 aa).

K183 acts as the Proton donor in catalysis. D213, E239, and D264 together coordinate Mg(2+). The active-site Proton acceptor is the K290.

It belongs to the mandelate racemase/muconate lactonizing enzyme family. MenC type 1 subfamily. In terms of assembly, monomer. A divalent metal cation is required as a cofactor.

It carries out the reaction (1R,6R)-6-hydroxy-2-succinyl-cyclohexa-2,4-diene-1-carboxylate = 2-succinylbenzoate + H2O. It functions in the pathway quinol/quinone metabolism; 1,4-dihydroxy-2-naphthoate biosynthesis; 1,4-dihydroxy-2-naphthoate from chorismate: step 4/7. The protein operates within cofactor biosynthesis; phylloquinone biosynthesis. Functionally, converts 2-succinyl-6-hydroxy-2,4-cyclohexadiene-1-carboxylate (SHCHC) to 2-succinylbenzoate (OSB). Does not show N-succinylamino acid racemase (NSAR) activity with N-succinyl-L-phenylglycine as substrate. This chain is o-succinylbenzoate synthase, found in Desulfotalea psychrophila (strain LSv54 / DSM 12343).